The chain runs to 121 residues: Basic phospholipase A2 homolog piratoxin-2 (121 aa).

Intrachain disulfides connect Cys26–Cys115, Cys28–Cys44, Cys43–Cys95, Cys49–Cys121, Cys50–Cys88, Cys57–Cys81, and Cys75–Cys86. An important for membrane-damaging activities in eukaryotes and bacteria; heparin-binding region spans residues Lys105–Lys117.

It belongs to the phospholipase A2 family. Group II subfamily. K49 sub-subfamily. Homodimer; non-covalently linked. In terms of tissue distribution, expressed by the venom gland.

The protein localises to the secreted. In terms of biological role, snake venom phospholipase A2 (PLA2) homolog that lacks enzymatic activity. Shows myotoxic activity and edema-inducing activities in vivo. A model of myotoxic mechanism has been proposed: an apo Lys49-PLA2 is activated by the entrance of a hydrophobic molecule (e.g. fatty acid) at the hydrophobic channel of the protein leading to a reorientation of a monomer. This reorientation causes a transition between 'inactive' to 'active' states, causing alignment of C-terminal and membrane-docking sites (MDoS) side-by-side and putting the membrane-disruption sites (MDiS) in the same plane, exposed to solvent and in a symmetric position for both monomers. The MDoS region stabilizes the toxin on membrane by the interaction of charged residues with phospholipid head groups. Subsequently, the MDiS region destabilizes the membrane with penetration of hydrophobic residues. This insertion causes a disorganization of the membrane, allowing an uncontrolled influx of ions (i.e. calcium and sodium), and eventually triggering irreversible intracellular alterations and cell death. The protein is Basic phospholipase A2 homolog piratoxin-2 of Bothrops pirajai (Piraja's lancehead).